The chain runs to 321 residues: Degreening-related gene dee76 protein (321 aa).

It belongs to the Mo25 family.

The polypeptide is Degreening-related gene dee76 protein (DEE76) (Auxenochlorella protothecoides (Green microalga)).